We begin with the raw amino-acid sequence, 33 residues long: MNAPARAAAKTAADALAAAKKTAADAAAAAAAA.

The protein belongs to the type-I AFP family.

In terms of biological role, antifreeze proteins lower the blood freezing point. In Myoxocephalus scorpius (Shorthorn sculpin), this protein is Ice-structuring protein SS-3.